Consider the following 172-residue polypeptide: Nicotinamide-nucleotide adenylyltransferase (172 aa).

Belongs to the archaeal NMN adenylyltransferase family.

The protein localises to the cytoplasm. The catalysed reaction is beta-nicotinamide D-ribonucleotide + ATP + H(+) = diphosphate + NAD(+). It participates in cofactor biosynthesis; NAD(+) biosynthesis; NAD(+) from nicotinamide D-ribonucleotide: step 1/1. This Saccharolobus solfataricus (strain ATCC 35092 / DSM 1617 / JCM 11322 / P2) (Sulfolobus solfataricus) protein is Nicotinamide-nucleotide adenylyltransferase.